A 387-amino-acid polypeptide reads, in one-letter code: Alpha-sarcoglycan (387 aa).

Positions 1-23 are cleaved as a signal peptide; sequence MAATLTWILLFVGLLAGLRDTKA. Topologically, residues 24-290 are extracellular; the sequence is QQTTLYPLVG…ATGRDFLADA (267 aa). 2 N-linked (GlcNAc...) asparagine glycosylation sites follow: Asn-174 and Asn-246. A helical transmembrane segment spans residues 291-311; that stretch reads LVTLLVPLLVALLLTLLLAYI. Residues 312–387 lie on the Cytoplasmic side of the membrane; that stretch reads MCCRREGQLK…AQVPLILDQH (76 aa). Ser-377 is subject to Phosphoserine.

Belongs to the sarcoglycan alpha/epsilon family. Interacts with the syntrophin SNTA1. Cross-link to form 2 major subcomplexes: one consisting of SGCB, SGCD and SGCG and the other consisting of SGCB and SGCD. The association between SGCB and SGCG is particularly strong while SGCA is loosely associated with the other sarcoglycans. Strongly expressed in skeletal and heart muscle.

It localises to the cell membrane. The protein localises to the sarcolemma. The protein resides in the cytoplasm. It is found in the cytoskeleton. Functionally, component of the sarcoglycan complex, a subcomplex of the dystrophin-glycoprotein complex which forms a link between the F-actin cytoskeleton and the extracellular matrix. The chain is Alpha-sarcoglycan (SGCA) from Mesocricetus auratus (Golden hamster).